The chain runs to 123 residues: MIQQESRLRVADNTGAREILVIRPLGGSVRRSAGIGDVVVATVKEAAPGGTVKAGDIVKAVIVRAKKETRRPDGSYIAFDENAAVIIKANDNDPRGTRIFGPVARELRDKKFMKIVSLAPEVL.

Belongs to the universal ribosomal protein uL14 family. As to quaternary structure, part of the 50S ribosomal subunit. Forms a cluster with proteins L3 and L19. In the 70S ribosome, L14 and L19 interact and together make contacts with the 16S rRNA in bridges B5 and B8.

In terms of biological role, binds to 23S rRNA. Forms part of two intersubunit bridges in the 70S ribosome. In Corynebacterium jeikeium (strain K411), this protein is Large ribosomal subunit protein uL14.